The sequence spans 364 residues: Putative transport protein BUsg_115 (364 aa).

Helical transmembrane passes span 18-38, 40-60, 65-85, 161-181, 215-235, 243-263, 280-300, 309-329, and 331-351; these read IFII…ILGF, WASM…KFLG, VAVI…IVFL, GLFI…YWNG, ALGV…GLLI, LLMI…PILI, LLLI…PFFI, FLIL…GLFI, and PVVL…ISIA.

Belongs to the autoinducer-2 exporter (AI-2E) (TC 2.A.86) family.

The protein resides in the cell membrane. This Buchnera aphidicola subsp. Schizaphis graminum (strain Sg) protein is Putative transport protein BUsg_115.